We begin with the raw amino-acid sequence, 193 residues long: nitroreductase FRM2 (193 aa).

It belongs to the nitroreductase family. The cofactor is FMN.

The protein localises to the cytoplasm. Its subcellular location is the nucleus. The enzyme catalyses 4-(hydroxyamino)quinoline N-oxide + 2 NAD(+) + H2O = 4-nitroquinoline N-oxide + 2 NADH + 2 H(+). Its function is as follows. Type II nitroreductase, able to reduce 4-nitroquinoline N-oxide (4-NQO) into 4-aminoquinoline-N-oxide (4-AQO) via 4-hydroxyaminoquinoline (4-HAQO), using NADH as reductant. involved in the oxidative stress response. Plays a possible role in the metal stress response. Involved in negative regulation of fatty acid metabolism. In Saccharomyces cerevisiae (strain ATCC 204508 / S288c) (Baker's yeast), this protein is nitroreductase FRM2.